Here is a 291-residue protein sequence, read N- to C-terminus: Pyridoxal 5'-phosphate synthase subunit PdxS (291 aa).

Asp-23 contributes to the D-ribose 5-phosphate binding site. Lys-80 acts as the Schiff-base intermediate with D-ribose 5-phosphate in catalysis. Gly-152 is a D-ribose 5-phosphate binding site. Arg-164 is a binding site for D-glyceraldehyde 3-phosphate. Residues Gly-213 and 234-235 contribute to the D-ribose 5-phosphate site; that span reads GS.

It belongs to the PdxS/SNZ family. As to quaternary structure, in the presence of PdxT, forms a dodecamer of heterodimers.

It catalyses the reaction aldehydo-D-ribose 5-phosphate + D-glyceraldehyde 3-phosphate + L-glutamine = pyridoxal 5'-phosphate + L-glutamate + phosphate + 3 H2O + H(+). The protein operates within cofactor biosynthesis; pyridoxal 5'-phosphate biosynthesis. Its function is as follows. Catalyzes the formation of pyridoxal 5'-phosphate from ribose 5-phosphate (RBP), glyceraldehyde 3-phosphate (G3P) and ammonia. The ammonia is provided by the PdxT subunit. Can also use ribulose 5-phosphate and dihydroxyacetone phosphate as substrates, resulting from enzyme-catalyzed isomerization of RBP and G3P, respectively. The protein is Pyridoxal 5'-phosphate synthase subunit PdxS of Methanocorpusculum labreanum (strain ATCC 43576 / DSM 4855 / Z).